The sequence spans 299 residues: Homoserine O-acetyltransferase (299 aa).

Residue Cys142 is the Acyl-thioester intermediate of the active site. 2 residues coordinate substrate: Lys163 and Ser192. His235 serves as the catalytic Proton acceptor. Residue Glu237 is part of the active site. Arg249 is a substrate binding site.

Belongs to the MetA family.

The protein localises to the cytoplasm. It carries out the reaction L-homoserine + acetyl-CoA = O-acetyl-L-homoserine + CoA. Its pathway is amino-acid biosynthesis; L-methionine biosynthesis via de novo pathway; O-acetyl-L-homoserine from L-homoserine: step 1/1. Transfers an acetyl group from acetyl-CoA to L-homoserine, forming acetyl-L-homoserine. This chain is Homoserine O-acetyltransferase, found in Synechococcus elongatus (strain ATCC 33912 / PCC 7942 / FACHB-805) (Anacystis nidulans R2).